The chain runs to 470 residues: Argininosuccinate lyase (470 aa).

It belongs to the lyase 1 family. Argininosuccinate lyase subfamily.

It localises to the cytoplasm. It catalyses the reaction 2-(N(omega)-L-arginino)succinate = fumarate + L-arginine. The protein operates within amino-acid biosynthesis; L-arginine biosynthesis; L-arginine from L-ornithine and carbamoyl phosphate: step 3/3. The sequence is that of Argininosuccinate lyase from Mycobacterium leprae (strain Br4923).